Consider the following 674-residue polypeptide: Inactivation-no-after-potential D protein (674 aa).

In terms of domain architecture, PDZ 1 spans 17–106 (MVTLDKTGKK…KIELEIQTFD (90 aa)). The tract at residues 133-192 (QTTNNNASGGQGMGQGQGQGQGMAGMNRQQSMQKRNTTFTASMRQKHSNYADEDDEDTRD) is disordered. The segment covering 141–155 (GGQGMGQGQGQGQGM) has biased composition (gly residues). The span at 159–175 (NRQQSMQKRNTTFTASM) shows a compositional bias: polar residues. 2 consecutive PDZ domains span residues 249–332 (RIEV…TSRR) and 364–448 (ARTV…LTLK). Over residues 458–475 (AAEEKKKEEAKKEEEKPQ) the composition is skewed to basic and acidic residues. A disordered region spans residues 458-481 (AAEEKKKEEAKKEEEKPQEPATAE). PDZ domains are found at residues 489–577 (LIEL…RADP) and 584–664 (NVDL…TRPK). A phosphoserine mark is found at Ser-598 and Ser-600.

Interacts with the C-terminus of trp, and with norpA and inaC to form the inaD signaling complex. Interacts with Fkbp59, which together with trpl, rhodopsin and calmodulin may also be part of the inaD complex. Post-translationally, phosphorylated by inaC. As to expression, expressed in photoreceptor cells (R cells) of the compound eyes and ocelli.

The protein resides in the cell projection. The protein localises to the rhabdomere. Its function is as follows. Involved in the negative feedback regulation of the light-activated signaling cascade in photoreceptors through a calcium-mediated process. Interacts with tetrapeptide ligand located in C-terminal sequence of 3 key components of the visual cascade, tethering them and forming a macromolecular signaling phototransduction complex. This is Inactivation-no-after-potential D protein (inaD) from Drosophila melanogaster (Fruit fly).